The primary structure comprises 129 residues: Small ribosomal subunit protein uS11 (129 aa).

It belongs to the universal ribosomal protein uS11 family. Part of the 30S ribosomal subunit. Interacts with proteins S7 and S18. Binds to IF-3.

Located on the platform of the 30S subunit, it bridges several disparate RNA helices of the 16S rRNA. Forms part of the Shine-Dalgarno cleft in the 70S ribosome. In Salmonella typhi, this protein is Small ribosomal subunit protein uS11.